The sequence spans 391 residues: S-adenosylmethionine synthase (391 aa).

Histidine 14 contributes to the ATP binding site. Aspartate 16 is a Mg(2+) binding site. A K(+)-binding site is contributed by glutamate 42. L-methionine contacts are provided by glutamate 55 and glutamine 98. Residues 98 to 108 are flexible loop; it reads QSVDIAIGVDE. ATP contacts are provided by residues 172–174, 238–239, aspartate 247, 253–254, alanine 270, and lysine 274; these read DGK, RF, and RK. Aspartate 247 provides a ligand contact to L-methionine. Lysine 278 is an L-methionine binding site.

Belongs to the AdoMet synthase family. In terms of assembly, homotetramer; dimer of dimers. Requires Mg(2+) as cofactor. The cofactor is K(+).

It localises to the cytoplasm. The enzyme catalyses L-methionine + ATP + H2O = S-adenosyl-L-methionine + phosphate + diphosphate. It functions in the pathway amino-acid biosynthesis; S-adenosyl-L-methionine biosynthesis; S-adenosyl-L-methionine from L-methionine: step 1/1. Its function is as follows. Catalyzes the formation of S-adenosylmethionine (AdoMet) from methionine and ATP. The overall synthetic reaction is composed of two sequential steps, AdoMet formation and the subsequent tripolyphosphate hydrolysis which occurs prior to release of AdoMet from the enzyme. The polypeptide is S-adenosylmethionine synthase (Clostridium botulinum (strain Okra / Type B1)).